The sequence spans 532 residues: Membrane protein insertase YidC (532 aa).

The next 5 membrane-spanning stretches (helical) occupy residues 7-27, 336-356, 413-433, 450-470, and 492-512; these read FFIF…QSQM, LTIL…ITFI, GGFL…YMLI, LSSQ…MFFI, and PVIF…YYII.

It belongs to the OXA1/ALB3/YidC family. Type 1 subfamily. Interacts with the Sec translocase complex via SecD. Specifically interacts with transmembrane segments of nascent integral membrane proteins during membrane integration.

The protein resides in the cell membrane. Its function is as follows. Required for the insertion and/or proper folding and/or complex formation of integral membrane proteins into the membrane. Involved in integration of membrane proteins that insert both dependently and independently of the Sec translocase complex, as well as at least some lipoproteins. Aids folding of multispanning membrane proteins. This is Membrane protein insertase YidC from Buchnera aphidicola subsp. Acyrthosiphon pisum (strain 5A).